The primary structure comprises 104 residues: Large ribosomal subunit protein bL21 (104 aa).

The protein belongs to the bacterial ribosomal protein bL21 family. As to quaternary structure, part of the 50S ribosomal subunit. Contacts protein L20.

Functionally, this protein binds to 23S rRNA in the presence of protein L20. The chain is Large ribosomal subunit protein bL21 from Streptococcus uberis (strain ATCC BAA-854 / 0140J).